Reading from the N-terminus, the 689-residue chain is Protein asunder (689 aa).

Residues 521 to 550 adopt a coiled-coil conformation; sequence NGARLKLSKAKDQYRLLYRELEQLIQLNAT. Disordered stretches follow at residues 591-619 and 669-689; these read SPER…SKRR and KDAV…SVRS. The segment covering 599–614 has biased composition (low complexity); the sequence is SSVGASGSSNSNSLLK. A Nuclear localization signal (NLS) motif is present at residues 613–619; the sequence is LKASKRR.

This sequence belongs to the Integrator subunit 13 family. In terms of assembly, belongs to the multiprotein complex Integrator, at least composed of IntS1, IntS2, IntS3, IntS4, omd/IntS5, IntS6, defl/IntS7, IntS8, IntS9, IntS10, IntS11, IntS12, asun/IntS13, IntS14 and IntS15. The core complex associates with protein phosphatase 2A subunits mts/PP2A and Pp2A-29B, to form the Integrator-PP2A (INTAC) complex. In terms of processing, phosphorylated.

It is found in the nucleus. The protein resides in the cytoplasm. Its subcellular location is the perinuclear region. Functionally, component of the integrator complex, a multiprotein complex that terminates RNA polymerase II (Pol II) transcription in the promoter-proximal region of genes. The integrator complex provides a quality checkpoint during transcription elongation by driving premature transcription termination of transcripts that are unfavorably configured for transcriptional elongation: the complex terminates transcription by (1) catalyzing dephosphorylation of the C-terminal domain (CTD) of Pol II subunit Polr2A/Rbp1 and Spt5, and (2) degrading the exiting nascent RNA transcript via endonuclease activity. The integrator complex is also involved in the 3'-end processing of the U7 snRNA, and also the spliceosomal snRNAs U1, U2, U4 and U5. In Drosophila simulans (Fruit fly), this protein is Protein asunder (asun).